A 254-amino-acid chain; its full sequence is Phosphonates import ATP-binding protein PhnC 2 (254 aa).

The region spanning 4-248 is the ABC transporter domain; it reads LEVNNLGKHY…KIESIYGFQQ (245 aa). 37–44 is a binding site for ATP; it reads GPSGAGKS.

It belongs to the ABC transporter superfamily. Phosphonates importer (TC 3.A.1.9.1) family. In terms of assembly, the complex is composed of two ATP-binding proteins (PhnC), two transmembrane proteins (PhnE) and a solute-binding protein (PhnD).

It localises to the cell membrane. It carries out the reaction phosphonate(out) + ATP + H2O = phosphonate(in) + ADP + phosphate + H(+). Its function is as follows. Part of the ABC transporter complex PhnCDE involved in phosphonates import. Responsible for energy coupling to the transport system. The polypeptide is Phosphonates import ATP-binding protein PhnC 2 (Oceanobacillus iheyensis (strain DSM 14371 / CIP 107618 / JCM 11309 / KCTC 3954 / HTE831)).